The chain runs to 475 residues: Phenolic acid decarboxylase (475 aa).

Mn(2+)-binding residues include asparagine 161, histidine 183, and glutamate 225. Prenylated FMN contacts are provided by residues 161 to 166 and 182 to 183; these read NVGIYR and MH. The active-site Proton donor is glutamate 274.

This sequence belongs to the UbiD family. YclC subfamily. Prenylated FMN is required as a cofactor. Requires Mn(2+) as cofactor.

It catalyses the reaction 4-hydroxybenzoate + H(+) = phenol + CO2. The enzyme catalyses vanillate + H(+) = guaiacol + CO2. In terms of biological role, involved in the non-oxidative decarboxylation and detoxification of phenolic derivatives under both aerobic and anaerobic conditions. Phenolic acid decarboxylase that catalyzes the reversible decarboxylation of 4-hydroxybenzoate and vanillate. The protein is Phenolic acid decarboxylase of Escherichia coli O157:H7.